We begin with the raw amino-acid sequence, 83 residues long: Toxin BmKBT (83 aa).

The signal sequence occupies residues 1-19; that stretch reads MKAALLLVIFSLMLIGVLT. Positions 21-81 constitute an LCN-type CS-alpha/beta domain; that stretch reads KSGYPTDHEG…TWSRATNKCR (61 aa). 4 disulfide bridges follow: C31–C80, C35–C54, C41–C61, and C45–C63. K83 is a propeptide (removed by a carboxypeptidase).

It belongs to the long (4 C-C) scorpion toxin superfamily. Sodium channel inhibitor family. Beta subfamily. As to expression, expressed by the venom gland.

Its subcellular location is the secreted. Functionally, this toxin increases the peak sodium current, slows down the inactivation of sodium channels (Nav), and prolongs the action potential of dorsal root ganglion neurons, which indicates that it behaves as a classical alpha-toxin. It binds to mammal brain and insect sodium channels, but with a different manner. This peptide may bind to a distinct receptor site on mammal brain sodium channels, which is unconnected with that for BmKAS (a beta-toxin), BmKIT2 (a beta-toxin) or BmK I (an alpha toxin). In contrast, the receptor site for BmKabT on insect sodium channels might be closely related to that for the beta-insect depressant toxin BmKIT2. Possesses potent toxicity in mice but induces only paralysis in cotton bollworm. In Olivierus martensii (Manchurian scorpion), this protein is Toxin BmKBT.